The sequence spans 339 residues: Phytoene synthase (339 aa).

The protein belongs to the phytoene/squalene synthase family. ATP is required as a cofactor. Requires Mn(2+) as cofactor. The cofactor is Mg(2+).

It participates in carotenoid biosynthesis; phytoene biosynthesis. Its function is as follows. Involved in the biosynthesis of carotenoids. Catalyzes the condensation of two molecules of geranylgeranyl diphosphate (GGPP) to give prephytoene diphosphate (PPPP) and the subsequent rearrangement of the cyclopropylcarbinyl intermediate to yield phytoene. This is Phytoene synthase (crtB) from Rhodobacter capsulatus (strain ATCC BAA-309 / NBRC 16581 / SB1003).